Here is a 309-residue protein sequence, read N- to C-terminus: Protein lifeguard 3 (309 aa).

2 disordered regions span residues Met1–Val31 and Pro64–Pro84. The span at Asp70–Pro84 shows a compositional bias: basic and acidic residues. Phosphoserine is present on residues Ser79 and Ser81. 7 consecutive transmembrane segments (helical) span residues Tyr101–Val121, Val132–Cys152, Ile163–Met183, Ala188–Phe208, Phe221–Phe241, Ile244–Ala264, and Gly286–Gly306.

This sequence belongs to the BI1 family. LFG subfamily. In terms of tissue distribution, expressed in most tissues except spleen, thymus and testis.

It localises to the membrane. The protein localises to the lysosome membrane. Its subcellular location is the endosome membrane. Functionally, negatively regulates aortic matrix metalloproteinase-9 (MMP9) production and may play a protective role in vascular remodeling. This chain is Protein lifeguard 3 (Tmbim1), found in Mus musculus (Mouse).